The following is a 341-amino-acid chain: Probable long-chain-alcohol O-fatty-acyltransferase 9 (341 aa).

The next 7 helical transmembrane spans lie at 9–29 (IIVW…SANI), 36–56 (LFSV…FSSV), 82–102 (GPLF…CFPI), 122–142 (FAIK…SHFL), 146–166 (VLLS…LGPL), 231–251 (MGYL…YFYI), and 295–315 (RLLT…PLFI).

Belongs to the wax synthase family.

The protein resides in the membrane. It carries out the reaction a long chain fatty alcohol + a fatty acyl-CoA = a wax ester + CoA. In terms of biological role, catalyzes the final step in the synthesis of long-chain linear esters (waxes). The chain is Probable long-chain-alcohol O-fatty-acyltransferase 9 from Arabidopsis thaliana (Mouse-ear cress).